The following is a 373-amino-acid chain: MKVANGYEYTAIMEKIAPKKLAMEGDPIGLQVGDLSRKVRKIMFTLDVLEEVVDEAIEKKVDLIIAHHPFLYRPTQHIDTTTKQGKMIKKLIKHDITVFAAHTNLDIAQGGVNNILADLLHLQNTTMIEETYSEPYCKIAVYVPENELESVRLALVNNGAGQIGTEYTECTFHTTGIGSFKPGANANPTIGEKDALTSVPEVKIEAIFPQYLTETITKAVKIAHPYEEPAIDVYTLEMQTYKEGLGRVGMLPKKLGMVSFIDKLKTAFAIDNVRFIGDLKTTVHKVAIIGGDGNKFIHQAKSTGADVFITGDVYYHTGHDLLAINLPTIDAGHNIEKVMKGYLKNKMEEQAKILDYEAEFIVSEVNTDPFQFC.

Histidine 67, histidine 68, aspartate 106, histidine 333, and glutamate 336 together coordinate a divalent metal cation.

This sequence belongs to the GTP cyclohydrolase I type 2/NIF3 family. In terms of assembly, homohexamer.

This is GTP cyclohydrolase 1 type 2 homolog from Listeria monocytogenes serovar 1/2a (strain ATCC BAA-679 / EGD-e).